Here is a 173-residue protein sequence, read N- to C-terminus: Co-chaperone protein HscB homolog (173 aa).

The region spanning 5 to 77 is the J domain; the sequence is CHFAQFDLQP…PRRALYLLTL (73 aa).

Belongs to the HscB family. As to quaternary structure, interacts with HscA and stimulates its ATPase activity.

Its function is as follows. Co-chaperone involved in the maturation of iron-sulfur cluster-containing proteins. Seems to help targeting proteins to be folded toward HscA. The polypeptide is Co-chaperone protein HscB homolog (Pseudomonas aeruginosa (strain UCBPP-PA14)).